We begin with the raw amino-acid sequence, 320 residues long: Cytosolic Fe-S cluster assembly factor NUBP1 (320 aa).

M1 is modified (N-acetylmethionine). [4Fe-4S] cluster-binding residues include C8, C22, C25, and C31. 62 to 69 provides a ligand contact to ATP; it reads GKGGVGKS. The [4Fe-4S] cluster site is built by C235 and C238. Residue S319 is modified to Phosphoserine.

Belongs to the Mrp/NBP35 ATP-binding proteins family. NUBP1/NBP35 subfamily. Heterotetramer of 2 NUBP1 and 2 NUBP2 chains. Interacts with KIFC1. Interacts with NUBP2. Interacts with the BBS/CCT complex subunit CCT1. [4Fe-4S] cluster is required as a cofactor.

The protein resides in the cytoplasm. The protein localises to the nucleus. It is found in the cell projection. Its subcellular location is the cytoskeleton. It localises to the cilium axoneme. The protein resides in the cilium basal body. The protein localises to the microtubule organizing center. It is found in the centrosome. Its subcellular location is the centriole. Component of the cytosolic iron-sulfur (Fe/S) protein assembly (CIA) machinery. Required for maturation of extramitochondrial Fe-S proteins. The NUBP1-NUBP2 heterotetramer forms a Fe-S scaffold complex, mediating the de novo assembly of an Fe-S cluster and its transfer to target apoproteins. Implicated in the regulation of centrosome duplication. Negatively regulates cilium formation and structure. The chain is Cytosolic Fe-S cluster assembly factor NUBP1 from Homo sapiens (Human).